We begin with the raw amino-acid sequence, 139 residues long: Ribulose bisphosphate carboxylase small subunit, chromosomal (139 aa).

The protein belongs to the RuBisCO small chain family. As to quaternary structure, heterohexadecamer of 8 large and 8 small subunits.

Functionally, ruBisCO catalyzes two reactions: the carboxylation of D-ribulose 1,5-bisphosphate, the primary event in carbon dioxide fixation, as well as the oxidative fragmentation of the pentose substrate. Both reactions occur simultaneously and in competition at the same active site. Although the small subunit is not catalytic it is essential for maximal activity. The polypeptide is Ribulose bisphosphate carboxylase small subunit, chromosomal (Cupriavidus necator (Alcaligenes eutrophus)).